The primary structure comprises 185 residues: ATP synthase subunit delta (185 aa).

The protein belongs to the ATPase delta chain family. F-type ATPases have 2 components, F(1) - the catalytic core - and F(0) - the membrane proton channel. F(1) has five subunits: alpha(3), beta(3), gamma(1), delta(1), epsilon(1). F(0) has three main subunits: a(1), b(2) and c(10-14). The alpha and beta chains form an alternating ring which encloses part of the gamma chain. F(1) is attached to F(0) by a central stalk formed by the gamma and epsilon chains, while a peripheral stalk is formed by the delta and b chains.

The protein localises to the cell inner membrane. Its function is as follows. F(1)F(0) ATP synthase produces ATP from ADP in the presence of a proton or sodium gradient. F-type ATPases consist of two structural domains, F(1) containing the extramembraneous catalytic core and F(0) containing the membrane proton channel, linked together by a central stalk and a peripheral stalk. During catalysis, ATP synthesis in the catalytic domain of F(1) is coupled via a rotary mechanism of the central stalk subunits to proton translocation. In terms of biological role, this protein is part of the stalk that links CF(0) to CF(1). It either transmits conformational changes from CF(0) to CF(1) or is implicated in proton conduction. In Pelagibacter ubique (strain HTCC1062), this protein is ATP synthase subunit delta.